The following is a 143-amino-acid chain: MAPKKKVTGLIKLQIKAGAANPAPPIGPALGQHGVNIMEFCKAYNAQTESQRGNVIPVEITVYEDRTFTFILKTPPAAELIKKAAGVAKGSGTPHTVKVAKLTMDQVREIAEQKQADLNANDIDAAAKIIAGTARSMGITVEA.

It belongs to the universal ribosomal protein uL11 family. In terms of assembly, part of the ribosomal stalk of the 50S ribosomal subunit. Interacts with L10 and the large rRNA to form the base of the stalk. L10 forms an elongated spine to which L12 dimers bind in a sequential fashion forming a multimeric L10(L12)X complex. Post-translationally, one or more lysine residues are methylated.

In terms of biological role, forms part of the ribosomal stalk which helps the ribosome interact with GTP-bound translation factors. The protein is Large ribosomal subunit protein uL11 of Clavibacter sepedonicus (Clavibacter michiganensis subsp. sepedonicus).